Reading from the N-terminus, the 561-residue chain is Arginine--tRNA ligase (561 aa).

The short motif at 108-118 (PNVAKEMHVGH) is the 'HIGH' region element.

This sequence belongs to the class-I aminoacyl-tRNA synthetase family. Monomer.

Its subcellular location is the cytoplasm. The enzyme catalyses tRNA(Arg) + L-arginine + ATP = L-arginyl-tRNA(Arg) + AMP + diphosphate. The protein is Arginine--tRNA ligase of Haemophilus ducreyi (strain 35000HP / ATCC 700724).